A 208-amino-acid chain; its full sequence is Ribosome maturation factor RimM (208 aa).

The 108-residue stretch at 98 to 205 (ADEFYVPDLI…IIEITPPDGL (108 aa)) folds into the PRC barrel domain. A disordered region spans residues 154-174 (LPSKSKRSRDTKNQKKNQSPP).

The protein belongs to the RimM family. As to quaternary structure, binds ribosomal protein uS19.

The protein localises to the cytoplasm. Its function is as follows. An accessory protein needed during the final step in the assembly of 30S ribosomal subunit, possibly for assembly of the head region. Essential for efficient processing of 16S rRNA. May be needed both before and after RbfA during the maturation of 16S rRNA. It has affinity for free ribosomal 30S subunits but not for 70S ribosomes. The protein is Ribosome maturation factor RimM of Trichodesmium erythraeum (strain IMS101).